We begin with the raw amino-acid sequence, 191 residues long: Fe/S biogenesis protein NfuA (191 aa).

2 residues coordinate [4Fe-4S] cluster: C149 and C152.

This sequence belongs to the NfuA family. As to quaternary structure, homodimer. [4Fe-4S] cluster is required as a cofactor.

Functionally, involved in iron-sulfur cluster biogenesis. Binds a 4Fe-4S cluster, can transfer this cluster to apoproteins, and thereby intervenes in the maturation of Fe/S proteins. Could also act as a scaffold/chaperone for damaged Fe/S proteins. The polypeptide is Fe/S biogenesis protein NfuA (Salmonella arizonae (strain ATCC BAA-731 / CDC346-86 / RSK2980)).